The chain runs to 436 residues: GTPase Der (436 aa).

2 EngA-type G domains span residues 4-167 (PTIA…PNEE) and 175-351 (IKFS…QSQN). GTP contacts are provided by residues 10–17 (GRPNVGKS), 57–61 (DTGGI), 119–122 (NKVD), 181–188 (GRPNVGKS), 229–233 (DTAGM), and 294–297 (NKWD). Residues 352-436 (TRIPSAVLND…PIHLIARKRK (85 aa)) enclose the KH-like domain.

This sequence belongs to the TRAFAC class TrmE-Era-EngA-EngB-Septin-like GTPase superfamily. EngA (Der) GTPase family. As to quaternary structure, associates with the 50S ribosomal subunit.

Its function is as follows. GTPase that plays an essential role in the late steps of ribosome biogenesis. The chain is GTPase Der from Streptococcus sanguinis (strain SK36).